Reading from the N-terminus, the 406-residue chain is DNA primase DnaG (406 aa).

The region spanning 167–253 (DAVVIVEGRA…CVEDLSRRTV (87 aa)) is the Toprim domain. Glu173, Asp215, and Asp217 together coordinate Mg(2+). The interval 259–309 (NKTPASAAAPIATTQSETAATDGSATPAPTPEPAPDTAPSPDSDGDDTEAA) is disordered. Residues 261-272 (TPASAAAPIATT) are compositionally biased toward low complexity. Over residues 286–296 (APTPEPAPDTA) the composition is skewed to pro residues.

The protein belongs to the archaeal DnaG primase family. In terms of assembly, forms a ternary complex with MCM helicase and DNA. Requires Mg(2+) as cofactor.

It carries out the reaction ssDNA + n NTP = ssDNA/pppN(pN)n-1 hybrid + (n-1) diphosphate.. In terms of biological role, RNA polymerase that catalyzes the synthesis of short RNA molecules used as primers for DNA polymerase during DNA replication. The protein is DNA primase DnaG of Halobacterium salinarum (strain ATCC 29341 / DSM 671 / R1).